The following is a 253-amino-acid chain: MSLVCSVIFIHHAFNANILDKDYAFSDGEILMVDNAVRTHFEPYERHFKEIGFNENTIKKYLQCTNIQTVTVPVPAKFLRASNVPTGLLNEMIAYLNSEERNHHNFSELLLFSCLSIFAACKGFITLLTNGVLSVSGKVRNIVNMKLAHPWKLKDICDCLYISESLLKKKLKQEQTTFSQILLDARMQHAKNLIRVEGSVNKIAEQCGYASTSYFIYAFRKHFGNSPKRVSKEYRCQRHTGMNTGNTMSALAI.

Positions 137-233 (GKVRNIVNMK…GNSPKRVSKE (97 aa)) constitute an HTH araC/xylS-type domain. 2 consecutive DNA-binding regions (H-T-H motif) follow at residues 154-175 (KDIC…KQEQ) and 200-223 (VNKI…RKHF).

Functionally, induces the expression of gadE. Could also regulate the expression of other genes involved in acid resistance. The chain is HTH-type transcriptional regulator YdeO (ydeO) from Shigella flexneri.